Reading from the N-terminus, the 360-residue chain is GDP-mannose transporter (360 aa).

Over 1–49 (MSSSETKGRNEEDVAEIKKAIATGAVKDPSNLSAIPPIFVVSGANFSMN) the chain is Cytoplasmic. Residues 50–67 (FLLLCIQSSVCCACVFAV) traverse the membrane as a helical segment. Over 68–84 (KKLGIISFRDFDMKDAK) the chain is Lumenal. The chain crosses the membrane as a helical span at residues 85-105 (MWFPISFLLVSVIYTGSKSLQ). Topologically, residues 106 to 110 (YLSIP) are cytoplasmic. Residues 111–131 (VYTIFKNLTIILIAYGEVLWF) form a helical membrane-spanning segment. At 132–134 (GGR) the chain is on the lumenal side. Residues 135–155 (VTALTFVSFIFMVISSIIAAW) traverse the membrane as a helical segment. The Cytoplasmic segment spans residues 156–164 (SDVQSALAS). A helical membrane pass occupies residues 165-185 (SIPGASSGVSVGAMQSLFGAL). Arg186 is a topological domain (lumenal). The helical transmembrane segment at 187–207 (GLNVGYFWMLVNCLTSAAYVL) threads the bilayer. At 208-220 (SMRKRIKSTGFSD) the chain is on the cytoplasmic side. The chain crosses the membrane as a helical span at residues 221–241 (WDTMFYNNLLSIPVLAVFSLI). At 242–260 (AEDWGRENLNRNFPAETRN) the chain is on the lumenal side. A helical membrane pass occupies residues 261 to 281 (FLLFAIAFSGAAAVGISYTTA). Residues 282 to 291 (WCVRVTSSTT) are Cytoplasmic-facing. The chain crosses the membrane as a helical span at residues 292–312 (YSMVGALNKLPVAASGMLFFG). At 313 to 314 (DP) the chain is on the lumenal side. The chain crosses the membrane as a helical span at residues 315–335 (VTVGSVSAVGVGFFAGIVYAV). The Cytoplasmic portion of the chain corresponds to 336 to 360 (AKNNQKKNERRQAADAIIPMASRKP).

It belongs to the TPT transporter family. SLC35D subfamily. In terms of assembly, homooligomer.

It localises to the golgi apparatus membrane. Its subcellular location is the cytoplasmic vesicle membrane. The protein resides in the endoplasmic reticulum membrane. Functionally, involved in the import of GDP-mannose from the cytoplasm into the Golgi lumen. The chain is GDP-mannose transporter (VRG4) from Coprinopsis cinerea (strain Okayama-7 / 130 / ATCC MYA-4618 / FGSC 9003) (Inky cap fungus).